Consider the following 377-residue polypeptide: Lactosylceramide 1,3-N-acetyl-beta-D-glucosaminyltransferase B (377 aa).

At 1-13 (MLISARRLRRCQS) the chain is on the cytoplasmic side. A helical; Signal-anchor for type II membrane protein transmembrane segment spans residues 14-30 (LQLLASCFVLSLMALLV). At 31 to 377 (QEDNSLVNHV…DTYPCSAAWS (347 aa)) the chain is on the lumenal side. Asparagine 56, asparagine 167, and asparagine 275 each carry an N-linked (GlcNAc...) asparagine glycan.

The protein belongs to the glycosyltransferase 31 family.

The protein localises to the golgi apparatus membrane. It carries out the reaction a beta-D-Gal-(1-&gt;4)-beta-D-Glc-(1&lt;-&gt;1)-Cer(d18:1(4E)) + UDP-N-acetyl-alpha-D-glucosamine = a beta-D-GlcNAc-(1-&gt;3)-beta-D-Gal-(1-&gt;4)-beta-D-Glc-(1&lt;-&gt;1)-Cer(d18:1(4E)) + UDP + H(+). The catalysed reaction is a neolactoside nLc4Cer(d18:1(4E)) + UDP-N-acetyl-alpha-D-glucosamine = a neolactoside IV(3)-beta-GlcNAc-nLc4Cer(d18:1(4E)) + UDP + H(+). The protein operates within protein modification; protein glycosylation. Beta-1,3-N-acetylglucosaminyltransferase that plays a key role in the synthesis of lacto- or neolacto-series carbohydrate chains on glycolipids. This chain is Lactosylceramide 1,3-N-acetyl-beta-D-glucosaminyltransferase B (b3gnt5-b), found in Xenopus laevis (African clawed frog).